Consider the following 272-residue polypeptide: Alcohol dehydrogenase-related 31 kDa protein (272 aa).

11-34 (YVADCGGIALETSKVLMTKNIAKL) contributes to the NAD(+) binding site. S139 is a substrate binding site. Y152 functions as the Proton acceptor in the catalytic mechanism.

The protein belongs to the short-chain dehydrogenases/reductases (SDR) family.

This Drosophila teissieri (Fruit fly) protein is Alcohol dehydrogenase-related 31 kDa protein (Adhr).